Here is a 61-residue protein sequence, read N- to C-terminus: Sec-independent protein translocase protein TatA (61 aa).

The helical transmembrane segment at 1-21 (MFSNIGFPGLILILVAVLILF) threads the bilayer.

It belongs to the TatA/E family. Forms a complex with TatC.

It is found in the cell membrane. Its function is as follows. Part of the twin-arginine translocation (Tat) system that transports large folded proteins containing a characteristic twin-arginine motif in their signal peptide across membranes. TatA could form the protein-conducting channel of the Tat system. This is Sec-independent protein translocase protein TatA from Bacillus anthracis (strain A0248).